Here is a 699-residue protein sequence, read N- to C-terminus: Elongation factor G (699 aa).

In terms of domain architecture, tr-type G spans glutamate 8 to isoleucine 288. Residues alanine 17 to threonine 24, aspartate 86 to histidine 90, and asparagine 140 to aspartate 143 each bind GTP.

The protein belongs to the TRAFAC class translation factor GTPase superfamily. Classic translation factor GTPase family. EF-G/EF-2 subfamily.

Its subcellular location is the cytoplasm. Its function is as follows. Catalyzes the GTP-dependent ribosomal translocation step during translation elongation. During this step, the ribosome changes from the pre-translocational (PRE) to the post-translocational (POST) state as the newly formed A-site-bound peptidyl-tRNA and P-site-bound deacylated tRNA move to the P and E sites, respectively. Catalyzes the coordinated movement of the two tRNA molecules, the mRNA and conformational changes in the ribosome. The protein is Elongation factor G of Rhizobium meliloti (strain 1021) (Ensifer meliloti).